Reading from the N-terminus, the 560-residue chain is Tudor and KH domain-containing protein (560 aa).

2 KH domains span residues 52–115 and 124–190; these read DIEI…KAAI and PVFE…KHLI. Residues lysine 65, lysine 76, lysine 110, lysine 112, lysine 152, lysine 175, lysine 181, lysine 187, and lysine 193 each participate in a glycyl lysine isopeptide (Lys-Gly) (interchain with G-Cter in ubiquitin) cross-link. Residues 211 to 230 form a disordered region; it reads RVPRKQPISVRREEVTEPGG. Glycyl lysine isopeptide (Lys-Gly) (interchain with G-Cter in ubiquitin) cross-links involve residues lysine 256 and lysine 267. The interval 268-291 is disordered; that stretch reads EGSWEKPNDDSFQNSGAQSSPETS. Residues 277–290 are compositionally biased toward polar residues; sequence DSFQNSGAQSSPET. Serine 278 carries the phosphoserine modification. Residues 353–412 enclose the Tudor domain; that stretch reads TVHVGDIVAAPLSTNGSWYRARVLGTLENGNLDLYFVDFGDNGDCALKDLRALRSDFLSL. Residues lysine 479, lysine 510, and lysine 529 each participate in a glycyl lysine isopeptide (Lys-Gly) (interchain with G-Cter in ubiquitin) cross-link.

It belongs to the Tdrkh family. In terms of assembly, interacts with (symmetrically methylated) PIWIL1, PIWIL2 and PIWIL4. Post-translationally, ubiquitinated by PRKN during mitophagy, leading to its degradation and enhancement of mitophagy. Deubiquitinated by USP30. Highly expressed in testis, present at lower level in brain. Weakly or not expressed in other tissues (at protein level).

The protein localises to the cytoplasm. It localises to the mitochondrion. Participates in the primary piRNA biogenesis pathway and is required during spermatogenesis to repress transposable elements and prevent their mobilization, which is essential for the germline integrity. The piRNA metabolic process mediates the repression of transposable elements during meiosis by forming complexes composed of piRNAs and Piwi proteins and govern the methylation and subsequent repression of transposons. Required for the final steps of primary piRNA biogenesis by participating in the processing of 31-37 nt intermediates into mature piRNAs. May act in pi-bodies and piP-bodies by transferring piRNA precursors or intermediates to or between these granules. This is Tudor and KH domain-containing protein (Tdrkh) from Mus musculus (Mouse).